Consider the following 206-residue polypeptide: FKBP-type 22 kDa peptidyl-prolyl cis-trans isomerase (206 aa).

The 87-residue stretch at 120–206 (TDRVRVHYTG…VFEVELLEIL (87 aa)) folds into the PPIase FKBP-type domain.

In terms of assembly, homodimer.

It localises to the cytoplasm. The protein localises to the periplasm. It carries out the reaction [protein]-peptidylproline (omega=180) = [protein]-peptidylproline (omega=0). Its activity is regulated as follows. Strongly inhibited by FK506. Functionally, PPIases accelerate the folding of proteins. Catalyzes the cis-trans isomerization of proline imidic peptide bonds in oligopeptides. Displays a preference for substrates with a lysyl residue in the P1 position. This chain is FKBP-type 22 kDa peptidyl-prolyl cis-trans isomerase (fklB), found in Escherichia coli (strain K12).